The following is a 516-amino-acid chain: GMP synthase [glutamine-hydrolyzing] (516 aa).

In terms of domain architecture, Glutamine amidotransferase type-1 spans Pro5–Lys199. Residue Cys82 is the Nucleophile of the active site. Residues His173 and Glu175 contribute to the active site. The 192-residue stretch at Trp200–Arg391 folds into the GMPS ATP-PPase domain. Ser227–Ser233 provides a ligand contact to ATP.

Homodimer.

The enzyme catalyses XMP + L-glutamine + ATP + H2O = GMP + L-glutamate + AMP + diphosphate + 2 H(+). The protein operates within purine metabolism; GMP biosynthesis; GMP from XMP (L-Gln route): step 1/1. Its function is as follows. Catalyzes the synthesis of GMP from XMP. This chain is GMP synthase [glutamine-hydrolyzing], found in Nitratiruptor sp. (strain SB155-2).